The primary structure comprises 166 residues: Large ribosomal subunit protein uL10 (166 aa).

It belongs to the universal ribosomal protein uL10 family. As to quaternary structure, part of the ribosomal stalk of the 50S ribosomal subunit. The N-terminus interacts with L11 and the large rRNA to form the base of the stalk. The C-terminus forms an elongated spine to which L12 dimers bind in a sequential fashion forming a multimeric L10(L12)X complex.

Forms part of the ribosomal stalk, playing a central role in the interaction of the ribosome with GTP-bound translation factors. This Pseudomonas putida (strain W619) protein is Large ribosomal subunit protein uL10.